The primary structure comprises 124 residues: Large ribosomal subunit protein bL12 (124 aa).

The protein belongs to the bacterial ribosomal protein bL12 family. As to quaternary structure, homodimer. Part of the ribosomal stalk of the 50S ribosomal subunit. Forms a multimeric L10(L12)X complex, where L10 forms an elongated spine to which 2 to 4 L12 dimers bind in a sequential fashion. Binds GTP-bound translation factors.

In terms of biological role, forms part of the ribosomal stalk which helps the ribosome interact with GTP-bound translation factors. Is thus essential for accurate translation. The chain is Large ribosomal subunit protein bL12 from Christiangramia forsetii (strain DSM 17595 / CGMCC 1.15422 / KT0803) (Gramella forsetii).